The chain runs to 535 residues: MELDLSPSHLSSSPEDVCPTPGTPPETPPPPDNPPPGDVKRSQPLPIPSSRKLREEEFQATSLPSIPNPFPELCSPPSQKPILGGSSGARGLLPRDSSRLCVVKVYSEDGACRSVEVAAGATARHVCEMLVQRAHALSDENWGLVECHPYLALERGLEDHESVVEVQEAWPVGGDSRFIFRKNFAKYELFKSPPHTLFPEKMVSSCLDTPTGISHEDLIQNFLNAGSFPEIQGFLQLRGSGRGSGRKLWKRFFCFLRRSGLYYSTKGTSKDPRHLQYVADINESNVYVVTQGRKLYGIPTDFGFCVKPNKLRNGHKGLHIFCSEDEQSRTCWLSAFRLFKYGVQLYKNYQQAQSRHLRLSYLGSPPLRSVSDNTLVAMDFSGHAGRVIENPQEALSAATEEAQAWRKKTNHRLSLPTPCSGLSLSAAIHRTQPWFHGRISREESQRLIGQQGLVDGVFLVRESQRNPQGFVLSLCHLQKVKHYLILPSEDEGCLYFSMDDGQTRFTDLLQLVEFHQLNRGILPCLLRHCCARVAL.

A compositionally biased stretch (low complexity) spans 1–20 (MELDLSPSHLSSSPEDVCPT). The disordered stretch occupies residues 1–89 (MELDLSPSHL…KPILGGSSGA (89 aa)). Positions 21 to 37 (PGTPPETPPPPDNPPPG) are enriched in pro residues. The Ras-associating domain occupies 99–185 (RLCVVKVYSE…SRFIFRKNFA (87 aa)). Phosphotyrosine; by FAK1 occurs at positions 187 and 341. Positions 228–341 (FPEIQGFLQL…WLSAFRLFKY (114 aa)) constitute a PH domain. S364 is modified (phosphoserine). An SH2 domain is found at 434-530 (WFHGRISREE…ILPCLLRHCC (97 aa)).

This sequence belongs to the GRB7/10/14 family. In terms of assembly, homodimer. Interacts (via SH2 domain) with EGFR, ERBB2, ERBB3 (when phosphorylated), ERBB4 (when phosphorylated), EPHB1, INSR, FGFR1, PDGFRA (tyrosine phosphorylated) and PDGFRB (tyrosine phosphorylated). Interacts with SHC1. Interacts with RND1. Interacts (when tyrosine phosphorylated) with FHL2 and HAX1. Interacts (via SH2 domain) with RET and PTK2/FAK1. Interacts (when not phosphorylated) with ELAVL1. In stressed cells, but not in normal cells, part of a complex that contains at least GRB7, PTK2/FAK1, STAU1, ELAVL1 and TIA1. Interacts (via SH2 domain) with KIT (phosphorylated). Interacts (via SH2 domain) with TEK/TIE2 (tyrosine phosphorylated). In terms of processing, phosphorylated on serine and threonine residues in response to activation of receptor kinases. Phosphorylated on tyrosine residues by TEK/TIE2. Phosphorylated on tyrosine residues by PTK2/FAK1, and possibly also other kinases. Phosphorylation is enhanced by activation of receptor kinases by a cognate ligand. Tyrosine phosphorylation is essential for activation of down-stream protein kinases. Phosphorylation decreases affinity for target mRNA molecules. In terms of tissue distribution, detected in liver, kidney and placenta, and at lower levels in lung.

It is found in the cytoplasm. The protein resides in the cell projection. The protein localises to the cell junction. Its subcellular location is the focal adhesion. It localises to the cell membrane. It is found in the cytoplasmic granule. Its function is as follows. Adapter protein that interacts with the cytoplasmic domain of numerous receptor kinases and modulates down-stream signaling. Promotes activation of down-stream protein kinases, including STAT3, AKT1, MAPK1 and/or MAPK3. Promotes activation of HRAS. Plays a role in signal transduction in response to EGF. Plays a role in the regulation of cell proliferation and cell migration. Plays a role in the assembly and stability of RNA stress granules. Binds to the 5'UTR of target mRNA molecules and represses translation of target mRNA species, when not phosphorylated. Phosphorylation impairs RNA binding and promotes stress granule disassembly during recovery after cellular stress. This is Growth factor receptor-bound protein 7 (Grb7) from Rattus norvegicus (Rat).